Consider the following 297-residue polypeptide: GTPase Era (297 aa).

Positions 7–174 (HSGFVSIIGR…VQVVRDLLPE (168 aa)) constitute an Era-type G domain. A G1 region spans residues 15–22 (GRPNVGKS). 15-22 (GRPNVGKS) lines the GTP pocket. The tract at residues 41-45 (QTTRN) is G2. Residues 62–65 (DTPG) are G3. GTP contacts are provided by residues 62–66 (DTPGI) and 124–127 (NKVD). The tract at residues 124–127 (NKVD) is G4. Residues 153–155 (VSA) are G5. Residues 205–282 (THDEVPYSVA…FLELFVRVSR (78 aa)) form the KH type-2 domain.

This sequence belongs to the TRAFAC class TrmE-Era-EngA-EngB-Septin-like GTPase superfamily. Era GTPase family. Monomer.

The protein resides in the cytoplasm. The protein localises to the cell inner membrane. An essential GTPase that binds both GDP and GTP, with rapid nucleotide exchange. Plays a role in 16S rRNA processing and 30S ribosomal subunit biogenesis and possibly also in cell cycle regulation and energy metabolism. This chain is GTPase Era, found in Geotalea daltonii (strain DSM 22248 / JCM 15807 / FRC-32) (Geobacter daltonii).